The sequence spans 247 residues: Protein GrpE (247 aa).

Disordered stretches follow at residues 1 to 68 (MKKN…KNDD) and 226 to 247 (PAEKQDEKKAEESEAADKKNEN). Composition is skewed to basic and acidic residues over residues 7–35 (KHADKKEAAKEELEKDLQPKDESAVKDEQ), 43–54 (TSKENPQEDKAE), and 228–247 (EKQDEKKAEESEAADKKNEN).

This sequence belongs to the GrpE family. As to quaternary structure, homodimer.

It localises to the cytoplasm. In terms of biological role, participates actively in the response to hyperosmotic and heat shock by preventing the aggregation of stress-denatured proteins, in association with DnaK and GrpE. It is the nucleotide exchange factor for DnaK and may function as a thermosensor. Unfolded proteins bind initially to DnaJ; upon interaction with the DnaJ-bound protein, DnaK hydrolyzes its bound ATP, resulting in the formation of a stable complex. GrpE releases ADP from DnaK; ATP binding to DnaK triggers the release of the substrate protein, thus completing the reaction cycle. Several rounds of ATP-dependent interactions between DnaJ, DnaK and GrpE are required for fully efficient folding. This is Protein GrpE from Treponema denticola (strain ATCC 35405 / DSM 14222 / CIP 103919 / JCM 8153 / KCTC 15104).